We begin with the raw amino-acid sequence, 271 residues long: Putative phosphoenolpyruvate synthase regulatory protein (271 aa).

Residue 151–158 (GVSRSGKT) coordinates ADP.

It belongs to the pyruvate, phosphate/water dikinase regulatory protein family. PSRP subfamily.

The enzyme catalyses [pyruvate, water dikinase] + ADP = [pyruvate, water dikinase]-phosphate + AMP + H(+). It carries out the reaction [pyruvate, water dikinase]-phosphate + phosphate + H(+) = [pyruvate, water dikinase] + diphosphate. In terms of biological role, bifunctional serine/threonine kinase and phosphorylase involved in the regulation of the phosphoenolpyruvate synthase (PEPS) by catalyzing its phosphorylation/dephosphorylation. The sequence is that of Putative phosphoenolpyruvate synthase regulatory protein from Burkholderia ambifaria (strain MC40-6).